The chain runs to 280 residues: Ribosomal RNA small subunit methyltransferase A (280 aa).

Residues Asn27, Leu29, Gly54, Glu76, Asp102, and Asn122 each contribute to the S-adenosyl-L-methionine site.

This sequence belongs to the class I-like SAM-binding methyltransferase superfamily. rRNA adenine N(6)-methyltransferase family. RsmA subfamily.

It localises to the cytoplasm. It carries out the reaction adenosine(1518)/adenosine(1519) in 16S rRNA + 4 S-adenosyl-L-methionine = N(6)-dimethyladenosine(1518)/N(6)-dimethyladenosine(1519) in 16S rRNA + 4 S-adenosyl-L-homocysteine + 4 H(+). Functionally, specifically dimethylates two adjacent adenosines (A1518 and A1519) in the loop of a conserved hairpin near the 3'-end of 16S rRNA in the 30S particle. May play a critical role in biogenesis of 30S subunits. The polypeptide is Ribosomal RNA small subunit methyltransferase A (Oleidesulfovibrio alaskensis (strain ATCC BAA-1058 / DSM 17464 / G20) (Desulfovibrio alaskensis)).